Here is a 263-residue protein sequence, read N- to C-terminus: 4-hydroxy-2-oxo-heptane-1,7-dioate aldolase (263 aa).

His45 acts as the Proton acceptor in catalysis. Gln147 contributes to the substrate binding site. Position 149 (Glu149) interacts with a divalent metal cation. 2 residues coordinate substrate: Ala174 and Asp175. An a divalent metal cation-binding site is contributed by Asp175.

The protein belongs to the HpcH/HpaI aldolase family. Homohexamer; trimer of dimers. Requires a divalent metal cation as cofactor.

It carries out the reaction 4-hydroxy-2-oxoheptanedioate = succinate semialdehyde + pyruvate. It functions in the pathway aromatic compound metabolism; 4-hydroxyphenylacetate degradation; pyruvate and succinate semialdehyde from 4-hydroxyphenylacetate: step 7/7. In terms of biological role, catalyzes the reversible retro-aldol cleavage of 4-hydroxy-2-ketoheptane-1,7-dioate (HKHD) to pyruvate and succinic semialdehyde. The chain is 4-hydroxy-2-oxo-heptane-1,7-dioate aldolase from Salmonella heidelberg (strain SL476).